Here is a 109-residue protein sequence, read N- to C-terminus: SRA stem-loop-interacting RNA-binding protein, mitochondrial (109 aa).

Serine 15 carries the post-translational modification Phosphoserine. The 85-residue stretch at 19–103 (PVAFVRRIPW…RRPKLPQTSD (85 aa)) folds into the RRM domain. The residue at position 101 (threonine 101) is a Phosphothreonine. Position 102 is a phosphoserine (serine 102).

It localises to the mitochondrion. It is found in the nucleus. Its function is as follows. RNA-binding protein that acts as a nuclear receptor corepressor. Probably acts by binding the SRA RNA, and repressing the SRA-mediated nuclear receptor coactivation. Binds the STR7 loop of SRA RNA. Also able to repress glucocorticoid (GR), androgen (AR), thyroid (TR) and VDR-mediated transactivation. The protein is SRA stem-loop-interacting RNA-binding protein, mitochondrial (SLIRP) of Pongo abelii (Sumatran orangutan).